A 328-amino-acid chain; its full sequence is Urokinase plasminogen activator surface receptor (328 aa).

A signal peptide spans 1–24; sequence MGLLRRRLLLLVVVVTTCVPASQG. 3 consecutive UPAR/Ly6 domains span residues 25–118, 118–213, and 214–299; these read LRCI…GRYL, LECA…PPNG, and FQCY…RPTG. Cystine bridges form between Cys27–Cys48, Cys30–Cys36, and Cys41–Cys69. Residue Asn76 is glycosylated (N-linked (GlcNAc...) asparagine). 11 disulfides stabilise this stretch: Cys95–Cys100, Cys120–Cys147, Cys123–Cys130, Cys140–Cys169, Cys175–Cys192, Cys193–Cys198, Cys216–Cys244, Cys219–Cys227, Cys237–Cys263, Cys269–Cys288, and Cys289–Cys294. N-linked (GlcNAc...) asparagine glycans are attached at residues Asn184, Asn194, Asn222, Asn255, Asn283, and Asn290. Residue Gly299 is the site of GPI-anchor amidated glycine attachment. A propeptide spans 300–328 (removed in mature form); sequence GAPGPGPAHLILIASLLLTLRLWGIPLWT.

As to quaternary structure, monomer. Interacts (via the UPAR/Ly6 domains) with SRPX2. Interacts with MRC2. Interacts with SORL1 (via N-terminal ectodomain); this interaction decreases PLAUR internalization. The ternary complex composed of PLAUR-PLAU-SERPINE1 also interacts with SORL1. Interacts with CD82; this interaction prevents PLAUR from binding to its high affinity ligand PLAU.

Its subcellular location is the cell membrane. The protein localises to the secreted. In terms of biological role, acts as a receptor for urokinase plasminogen activator. Plays a role in localizing and promoting plasmin formation. Mediates the proteolysis-independent signal transduction activation effects of U-PA. The protein is Urokinase plasminogen activator surface receptor (Plaur) of Rattus norvegicus (Rat).